The chain runs to 323 residues: MTGPTCLAVVAGISGVFVFGALFSVAQIYNDISSFADNAHRELGEFKGFANDAWNSMVNHDDATRVARSVFVRRHKKHSQCNCGPQASNCPAGPPGPPGAPGDRGLDGQPGGAGNPGQPGVAGPKSHEQQECIKCPAGSPGPAGAPGAPGPQGPNGQPGHPGQGGSQGPAGPRGPAGDAGAPGQVGAPGNPGQAGRGGQRSHGLPGPSGAPGPQGPSGAPGQPGQSGGQGQQGPAGPAGPDGQPGQPGQDGQAGAPGNDGAPGADAAYCPCPSRSGSSSAVETGAAEQGYRHRAVAARHRNVIRRRVAKKRVVKKKRVVARQA.

The N-terminal stretch at 1–28 is a signal peptide; sequence MTGPTCLAVVAGISGVFVFGALFSVAQI. Over residues 80–89 the composition is skewed to polar residues; the sequence is QCNCGPQASN. The disordered stretch occupies residues 80–293; sequence QCNCGPQASN…GAAEQGYRHR (214 aa). Triple-helical region stretches follow at residues 93–125, 138–200, and 203–265; these read GPPG…AGPK, GSPG…GGQR, and GLPG…PGAD. A compositionally biased stretch (gly residues) spans 108–117; it reads GQPGGAGNPG. Over residues 136-146 the composition is skewed to low complexity; the sequence is PAGSPGPAGAP. Positions 159 to 168 are enriched in gly residues; it reads GHPGQGGSQG. A compositionally biased stretch (low complexity) spans 169 to 191; sequence PAGPRGPAGDAGAPGQVGAPGNP. Residues 224 to 233 show a composition bias toward gly residues; it reads GQSGGQGQQG. The segment covering 234–267 has biased composition (low complexity); that stretch reads PAGPAGPDGQPGQPGQDGQAGAPGNDGAPGADAA.

It belongs to the cuticular collagen family. In terms of assembly, collagen polypeptide chains are complexed within the cuticle by disulfide bonds and other types of covalent cross-links.

Its function is as follows. Nematode cuticles are composed largely of collagen-like proteins. The cuticle functions both as an exoskeleton and as a barrier to protect the worm from its environment. In Caenorhabditis elegans, this protein is Cuticle collagen 39 (col-39).